The primary structure comprises 704 residues: Ribosomal RNA large subunit methyltransferase K/L (704 aa).

It belongs to the methyltransferase superfamily. RlmKL family.

Its subcellular location is the cytoplasm. The catalysed reaction is guanosine(2445) in 23S rRNA + S-adenosyl-L-methionine = N(2)-methylguanosine(2445) in 23S rRNA + S-adenosyl-L-homocysteine + H(+). The enzyme catalyses guanosine(2069) in 23S rRNA + S-adenosyl-L-methionine = N(2)-methylguanosine(2069) in 23S rRNA + S-adenosyl-L-homocysteine + H(+). Its function is as follows. Specifically methylates the guanine in position 2445 (m2G2445) and the guanine in position 2069 (m7G2069) of 23S rRNA. This is Ribosomal RNA large subunit methyltransferase K/L from Alcanivorax borkumensis (strain ATCC 700651 / DSM 11573 / NCIMB 13689 / SK2).